The chain runs to 619 residues: Very-long-chain aldehyde decarbonylase GL1-1 (619 aa).

5 consecutive transmembrane segments (helical) span residues 44–64 (LLLLLVLFGVRALTYQLWSSF), 93–113 (DNFLILQVHMAAAAFYAFPSL), 123–143 (GLAVAALLHVAATEPLFYAAH), 190–210 (AAACAAGHGSVALAFAYVLGF), and 322–342 (PFLLPMWPFAFLVMLMMWAWS). A Fatty acid hydroxylase domain is found at 129 to 269 (LLHVAATEPL…MPLFDLIGGT (141 aa)).

It belongs to the sterol desaturase family. Homodimer.

The protein resides in the endoplasmic reticulum membrane. It carries out the reaction a long-chain fatty aldehyde + 2 NADPH + O2 + H(+) = a long-chain alkane + formate + 2 NADP(+) + H2O. Aldehyde decarbonylase involved in the conversion of aldehydes to alkanes. Core component of a very-long-chain alkane synthesis complex. The protein is Very-long-chain aldehyde decarbonylase GL1-1 of Oryza sativa subsp. indica (Rice).